The following is a 159-amino-acid chain: MAKVDVVSRVTELAEQVLSSLGMELVELEYKHEGRELVLRLFIDKEGGVTLDDCESVSRDLSQILEVEDIITGHYRFEVSSPGLDRPLKKGSDYEKYAGRLVKIRTFEALADDAGNKRKTFLGELKGLKEGQVHIALKEGQSAVIPLDKIAKANLEFEF.

Belongs to the RimP family.

Its subcellular location is the cytoplasm. In terms of biological role, required for maturation of 30S ribosomal subunits. The chain is Ribosome maturation factor RimP from Geotalea daltonii (strain DSM 22248 / JCM 15807 / FRC-32) (Geobacter daltonii).